Reading from the N-terminus, the 1202-residue chain is DNA polymerase beta (1202 aa).

3 tandem repeats follow at residues 1071 to 1074 (AGNP), 1075 to 1078 (AGNP), and 1079 to 1082 (AGNA). The tract at residues 1071-1082 (AGNPAGNPAGNA) is 3 X 4 AA tandem repeats of A-G-[NK]-[PA].

It belongs to the DNA polymerase type-B family.

It catalyses the reaction DNA(n) + a 2'-deoxyribonucleoside 5'-triphosphate = DNA(n+1) + diphosphate. Functionally, DNA-directed DNA polymerase involved in viral DNA replication. This Ornithodoros (relapsing fever ticks) protein is DNA polymerase beta (DPOL).